The primary structure comprises 369 residues: MSPAATESGRDLSVGVEEEFFLVDESGHLSAAGPDVVTEAGHDIHGLQRELARCQIETATGVCHTGEELHEELRSLRRRLAKAAAGRDLLLLPSGTSLVVEGLPPAITPSPRYEEMARHFGSIVDTVTTCGCHVHVGIPSRDVGVRVSNLVRSWLPVLLALAANSPFHSGHDTAYHSWRHIMWSRWPSAGPPPHFDSADEYEATVGAMIGTGAAMDRGMIYWHVRLADKQPTIEVRIADVAMTAAHAALYAVVVKGLVGWALQSLDDGLTVPWLRAELLRAQLWRAARDGLDGECTSPAADRVLPIRRQLELLNDCVAPGLGPSDRAFLESGLDTVLREGTGAERQRAEFTRVGTLAAVVDLLTREVVS.

This sequence belongs to the glutamate--cysteine ligase type 2 family. YbdK subfamily.

It catalyses the reaction L-cysteine + L-glutamate + ATP = gamma-L-glutamyl-L-cysteine + ADP + phosphate + H(+). Functionally, ATP-dependent carboxylate-amine ligase which exhibits weak glutamate--cysteine ligase activity. The chain is Putative glutamate--cysteine ligase 2-1 from Rhodococcus jostii (strain RHA1).